Reading from the N-terminus, the 217-residue chain is MTGKITTLLFDLDGTLINTNELIIKTFQATLQEFLPDRVFTREDILPFIGPSLMETFREINPAHAEEMRVFYREYNLKHHDDLILEYDGVYEAIRALYEEDYKLGIVSTKMYDTIMRGLKVTGLDKFFQVVIGLDQVSNAKPDPEGIEMALSLLNATKEEAIMIGDNYHDIEAGKNAETLTAGVAWAIKGPEHLAQFQPDFMLEKMSDLLAIVRDEE.

The active-site Nucleophile is D11.

The protein belongs to the HAD-like hydrolase superfamily. PpaX family. Mg(2+) serves as cofactor.

The catalysed reaction is diphosphate + H2O = 2 phosphate + H(+). Hydrolyzes pyrophosphate formed during P-Ser-HPr dephosphorylation by HPrK/P. Might play a role in controlling the intracellular pyrophosphate pool. The sequence is that of Pyrophosphatase PpaX from Listeria innocua serovar 6a (strain ATCC BAA-680 / CLIP 11262).